The chain runs to 560 residues: MFS siderochrome iron transporter 1 (560 aa).

N29 carries N-linked (GlcNAc...) asparagine glycosylation. A run of 11 helical transmembrane segments spans residues 53–73 (LWLTFALLYLVAFVDMLLVSV), 90–110 (LLASVSIVATILSGCSTLTLA), 115–135 (VWGRIEGFLFMLLVVVVALIM), 146–166 (VAAHTLYWTGHIGMIYCVDVM), 177–194 (MIMFSINNTPTIASTFAG), 211–231 (FGAFAIMLVGVSLPVIVIMLF), 264–284 (VVGIVLITASFALILLPFSIV), 291–311 (WATGYIIAMEVVGVVCGAIFL), 331–351 (PTIIGSCLLYGVMFASALLTI), 354–374 (AGYVLNSFSLSSAILAPGIGL), and 379–399 (FKWAAYAGIPFMLLGTALLIP). The N-linked (GlcNAc...) asparagine glycan is linked to N404. The next 3 membrane-spanning stretches (helical) occupy residues 407–427 (IGAVTITQVLVGIGTSFFSVC), 441–461 (VAVVLAIWGMFGSIGASVGLA), and 522–542 (VIAGVCMMPLVMASIVIWRNV).

The protein belongs to the major facilitator superfamily.

Its subcellular location is the membrane. Major facilitator transporter involved in siderophore transport. The sequence is that of MFS siderochrome iron transporter 1 from Ajellomyces capsulatus (Darling's disease fungus).